The primary structure comprises 475 residues: Transmembrane protein 44 (475 aa).

Topologically, residues 1-29 are extracellular; sequence MGEAPSPAPALWDWDYLDRCFARHRVCIS. Residues 30–50 form a helical membrane-spanning segment; that stretch reads FGLWICASSCWIAAHALLLYL. Residues 51–61 are Cytoplasmic-facing; it reads RCAQKPRQDQS. Residues 62–82 form a helical membrane-spanning segment; that stretch reads ALCAACCLLTSLCDTVGALLA. At 83-88 the chain is on the extracellular side; the sequence is RQLTIQ. Residues 89–109 traverse the membrane as a helical segment; sequence VFTGAYLAAIDLVNFMFILFP. At 110 to 135 the chain is on the cytoplasmic side; the sequence is VCGSKFKSNSDREARERKRRRQLRAS. Residues 136-156 form a helical membrane-spanning segment; sequence VFALALPLSLGPCWALWVAVP. Residues 157 to 179 lie on the Extracellular side of the membrane; sequence KASATIRGPQRRLLASLLQENTE. A helical transmembrane segment spans residues 180–200; it reads ILGYLLGSVAAFGSWASRIPP. Residues 201–259 lie on the Cytoplasmic side of the membrane; sequence LSRIAPPPTLGITTQHEIWRGQMSKPSQSPSRSPSGHWRAAAQRQVLGTEMCRGKTFPS. A helical membrane pass occupies residues 260–280; it reads IHLWTRLLSALAGLLYASAIV. Over 281–294 the chain is Extracellular; that stretch reads AHDQHPEYLLRATP. The helical transmembrane segment at 295–315 threads the bilayer; sequence WFLTSLGRAALDLAIIFLSCV. Residues 316–475 lie on the Cytoplasmic side of the membrane; the sequence is MKSKMRQALG…VRTAHLSDDD (160 aa). The segment at 390-475 is disordered; sequence SATRLPGDGQ…VRTAHLSDDD (86 aa). Low complexity predominate over residues 424–436; sequence SSGSSSEVSSINS. A compositionally biased stretch (basic and acidic residues) spans 464 to 475; it reads DSVRTAHLSDDD. At S465 the chain carries Phosphoserine.

The protein resides in the membrane. This chain is Transmembrane protein 44 (TMEM44), found in Homo sapiens (Human).